Here is a 191-residue protein sequence, read N- to C-terminus: Ribonuclease MC (191 aa).

Gln-9 provides a ligand contact to RNA. A disulfide bridge connects residues Cys-15 and Cys-23. Residues His-34, 72–73 (NV), Arg-75, Phe-81, 84–85 (HE), and 88–89 (KH) each bind RNA. The active-site Proton donor is the His-34. Cystine bridges form between Cys-48–Cys-92, Cys-152–Cys-185, and Cys-169–Cys-180. Glu-85 is an active-site residue. Catalysis depends on His-89, which acts as the Proton acceptor.

This sequence belongs to the RNase T2 family.

The catalysed reaction is a ribonucleotidyl-ribonucleotide-RNA + H2O = a 3'-end 3'-phospho-ribonucleotide-RNA + a 5'-end dephospho-ribonucleoside-RNA + H(+). Its function is as follows. Ribonuclease cleaving preferentially the 5'-side of uridine. This is Ribonuclease MC from Momordica charantia (Bitter gourd).